The chain runs to 568 residues: Urease subunit alpha (568 aa).

A Urease domain is found at 130 to 568 (GGIDTHIHFI…LPMAQRYFLF (439 aa)). Ni(2+) is bound by residues His-135, His-137, and Lys-218. N6-carboxylysine is present on Lys-218. Position 220 (His-220) interacts with substrate. Ni(2+)-binding residues include His-247 and His-273. The Proton donor role is filled by His-321. Asp-361 contributes to the Ni(2+) binding site.

Belongs to the metallo-dependent hydrolases superfamily. Urease alpha subunit family. As to quaternary structure, heterotrimer of UreA (gamma), UreB (beta) and UreC (alpha) subunits. Three heterotrimers associate to form the active enzyme. Ni cation is required as a cofactor. In terms of processing, carboxylation allows a single lysine to coordinate two nickel ions.

It localises to the cytoplasm. The catalysed reaction is urea + 2 H2O + H(+) = hydrogencarbonate + 2 NH4(+). It functions in the pathway nitrogen metabolism; urea degradation; CO(2) and NH(3) from urea (urease route): step 1/1. The protein is Urease subunit alpha of Burkholderia cenocepacia (strain ATCC BAA-245 / DSM 16553 / LMG 16656 / NCTC 13227 / J2315 / CF5610) (Burkholderia cepacia (strain J2315)).